The following is a 657-amino-acid chain: Zinc transporter ZIP4 (657 aa).

Positions 1–22 (MMLPKSLTQGLLLAMLVGTAAM) are cleaved as a signal peptide. At 23–335 (VQPYHLLSLL…QDQLSQAERY (313 aa)) the chain is on the extracellular side. N193, N220, and N268 each carry an N-linked (GlcNAc...) asparagine glycan. The helical transmembrane segment at 336 to 356 (LYGSLATLLICLCAVFGLLLL) threads the bilayer. Residues 357–374 (TCAKCSTATHYIMQTFLS) lie on the Cytoplasmic side of the membrane. A helical membrane pass occupies residues 375-395 (LAVGALTGDALLHLIPKVLGL). The Extracellular portion of the chain corresponds to 396–417 (HTHSGEVHSHEEESIGGQSTWR). Residues 418 to 438 (LLAVLGGFYIFFLFESFFNLL) traverse the membrane as a helical segment. Over 439–508 (LPRDQDHEKD…LRAELRMLPY (70 aa)) the chain is Cytoplasmic. Residues 462–464 (LQL) carry the Essential for SLC39A4 endocytosis motif. A disordered region spans residues 467 to 491 (SNLRQSKQPHESSRSDLVTEETPEL). The helical transmembrane segment at 509-528 (LITLGDAVHNFADGLAVGAA) threads the bilayer. Zn(2+) is bound by residues H517, N518, and D521. The Extracellular portion of the chain corresponds to 529-536 (FSSTWKTG). Residues 537 to 563 (LATSLAVFCHELPHELGDFAALLHAGL) form a helical membrane-spanning segment. Zn(2+)-binding residues include H546, E547, and H550. Residues 564 to 568 (TVKRA) lie on the Cytoplasmic side of the membrane. A helical transmembrane segment spans residues 569–589 (LLLNLASALTAFAGLYVALAV). Residues 590 to 597 (GVGEEGET) are Extracellular-facing. A helical transmembrane segment spans residues 598–618 (WILAVATGLFLYVALCDMLPA). Residues 619-627 (MMNVRDQRP) are Cytoplasmic-facing. A helical membrane pass occupies residues 628-648 (WLLFLLHNVGLLGGWTILLLL). The Extracellular segment spans residues 649–657 (SLYEDSITF).

Belongs to the ZIP transporter (TC 2.A.5) family. In terms of assembly, homodimer; homodimerization is mediated by the transmembrane domain. The extracellular N-terminal ectodomain is cleaved when cells are Zn(2+) deficient, N-terminally cleaved SLC39A4 is internalized at a faster rate. Post-translationally, under excess Zn(2+) conditions, SLC39A4 on the cell surface is rapidly endocytosed, ubiquitinated and degraded. In terms of processing, glycosylated. Expressed in duodenum, jejunum, and ileum.

The protein resides in the cell membrane. The protein localises to the recycling endosome membrane. Its subcellular location is the apical cell membrane. It carries out the reaction Zn(2+)(in) = Zn(2+)(out). Its function is as follows. Selective transporter that mediates the uptake of Zn(2+). Plays an essential role for dietary zinc uptake from small intestine. The Zn(2+) uniporter activity is regulated by zinc availability. Also exhibits polyspecific binding and transport of Cu(2+), Cd(2+) and possibly Ni(2+) but at higher concentrations. This chain is Zinc transporter ZIP4 (Slc39a4), found in Rattus norvegicus (Rat).